The chain runs to 145 residues: 3-hydroxyacyl-[acyl-carrier-protein] dehydratase FabZ (145 aa).

The active site involves histidine 50.

This sequence belongs to the thioester dehydratase family. FabZ subfamily.

The protein localises to the cytoplasm. The enzyme catalyses a (3R)-hydroxyacyl-[ACP] = a (2E)-enoyl-[ACP] + H2O. In terms of biological role, involved in unsaturated fatty acids biosynthesis. Catalyzes the dehydration of short chain beta-hydroxyacyl-ACPs and long chain saturated and unsaturated beta-hydroxyacyl-ACPs. The polypeptide is 3-hydroxyacyl-[acyl-carrier-protein] dehydratase FabZ (Coxiella burnetii (strain CbuK_Q154) (Coxiella burnetii (strain Q154))).